A 269-amino-acid polypeptide reads, in one-letter code: NAD kinase (269 aa).

Asp-45 serves as the catalytic Proton acceptor. Residues 45–46 (DG), 122–123 (NE), Arg-149, Asp-151, and Ala-186 each bind NAD(+).

This sequence belongs to the NAD kinase family. The cofactor is a divalent metal cation.

The protein localises to the cytoplasm. It catalyses the reaction NAD(+) + ATP = ADP + NADP(+) + H(+). Its function is as follows. Involved in the regulation of the intracellular balance of NAD and NADP, and is a key enzyme in the biosynthesis of NADP. Catalyzes specifically the phosphorylation on 2'-hydroxyl of the adenosine moiety of NAD to yield NADP. The chain is NAD kinase from Staphylococcus aureus (strain Mu3 / ATCC 700698).